The chain runs to 435 residues: tRNA modification GTPase MnmE (435 aa).

(6S)-5-formyl-5,6,7,8-tetrahydrofolate-binding residues include arginine 24, glutamate 85, and arginine 124. Positions 220-361 (GLVFTIVGAP…LRTALAERAR (142 aa)) constitute a TrmE-type G domain. Asparagine 230 serves as a coordination point for K(+). GTP contacts are provided by residues 230-235 (NVGKSS), 249-255 (SAIAGTT), and 274-277 (DTAG). Residue serine 234 coordinates Mg(2+). Serine 249, isoleucine 251, and threonine 254 together coordinate K(+). Threonine 255 is a binding site for Mg(2+). Residue lysine 435 coordinates (6S)-5-formyl-5,6,7,8-tetrahydrofolate.

The protein belongs to the TRAFAC class TrmE-Era-EngA-EngB-Septin-like GTPase superfamily. TrmE GTPase family. In terms of assembly, homodimer. Heterotetramer of two MnmE and two MnmG subunits. It depends on K(+) as a cofactor.

It is found in the cytoplasm. Functionally, exhibits a very high intrinsic GTPase hydrolysis rate. Involved in the addition of a carboxymethylaminomethyl (cmnm) group at the wobble position (U34) of certain tRNAs, forming tRNA-cmnm(5)s(2)U34. This chain is tRNA modification GTPase MnmE, found in Gluconacetobacter diazotrophicus (strain ATCC 49037 / DSM 5601 / CCUG 37298 / CIP 103539 / LMG 7603 / PAl5).